Reading from the N-terminus, the 116-residue chain is Putative antiporter subunit mnhC2 (116 aa).

The next 3 membrane-spanning stretches (helical) occupy residues 3–23 (LILL…ILSL), 28–48 (IVIG…SMGH), and 72–92 (AIVL…LVLV).

Belongs to the CPA3 antiporters (TC 2.A.63) subunit C family. May form a heterooligomeric complex that consists of seven subunits: mnhA2, mnhB2, mnhC2, mnhD2, mnhE2, mnhF2 and mnhG2.

It is found in the cell membrane. This Staphylococcus haemolyticus (strain JCSC1435) protein is Putative antiporter subunit mnhC2 (mnhC2).